We begin with the raw amino-acid sequence, 263 residues long: MGKLTGKTALITGALQGIGEGIARTFARHGANLILLDISPEIEKLADELCGRGHRCTAVVADVRDPASVAAAIKRAKEKEGRIDILVNNAGVCRLGSFLDMSDDDRDFHIDINIKGVWNVTKAVLPEMIARKDGRIVMMSSVTGDMVADPGETAYALTKAAIVGLTKSLAVEYAQSGIRVNAICPGYVRTPMAESIARQSNPEDPESVLTEMAKAIPMRRLADPLEVGELAAFLASDESSYLTGTQNVIDGGSTLPETVSVGI.

Residue 10–32 coordinates NAD(+); that stretch reads LITGALQGIGEGIARTFARHGAN. Residue Ser141 participates in substrate binding. Residue Tyr155 is the Proton acceptor of the active site.

It belongs to the short-chain dehydrogenases/reductases (SDR) family.

This chain is Oxidoreductase UcpA (ucpA), found in Escherichia coli (strain K12).